The following is a 316-amino-acid chain: Protein U25 (316 aa).

This sequence belongs to the herpesviridae US22 family.

This is Protein U25 (U25) from Human herpesvirus 6B (HHV-6 variant B).